The sequence spans 262 residues: Abhydrolase domain-containing protein ACTT2 (262 aa).

Residues 260-262 (SKL) carry the Peroxisomal targeting signal type 1 motif.

Belongs to the AB hydrolase superfamily. AKT2 hydrolase family.

It is found in the peroxisome. It functions in the pathway mycotoxin biosynthesis. Its function is as follows. Abhydrolase domain-containing protein; part of the gene clusters that mediate the biosynthesis of the host-selective toxins (HSTs) ACT-toxins responsible for brown spot of tangerine disease by the tangerine pathotype which affects tangerines and mandarins. ACT-toxins consist of three moieties, 9,10-epoxy-8-hydroxy-9-methyl-decatrienoic acid (EDA), valine and a polyketide. ACT-toxin I is toxic to both citrus and pear; toxin II the 5''-deoxy derivative of ACT-toxin I, is highly toxic to pear and slightly toxic to citrus. On cellular level, ACT-toxins affect plasma membrane of susceptible cells and cause a sudden increase in loss of K(+) after a few minutes of toxin treatment. The acyl-CoA ligase ACTT1, the hydrolase ACTT2, the enoyl-CoA hydratases ACTT3 and ACTT6, and the acyl-CoA synthetase ACTT5 are all involved in the biosynthesis of the AK-, AF- and ACT-toxin common 9,10-epoxy-8-hydroxy-9-methyl-decatrienoic acid (EDA) structural moiety. The exact role of each enzyme, and of additional enzymes identified within the AF-toxin clusters have still to be determined. On the other hand, ACTTS1 to ACTTS4 are specific to the tangerine pathotype. The function of ACTTS3 is to elongate the polyketide chain portion of ACT-toxin that is unique to this toxin. The enoyl-reductase ACTTS2 might complement the missing enoyl-reductase (ER) domain in ACTTS3 in the synthesis of the polyketide portion of ACT-toxin. The roles of the nonribosomal peptide synthetases-related proteins ACTTS1 and ACTTS4 have also still not been elucidated. The protein is Abhydrolase domain-containing protein ACTT2 of Alternaria alternata (Alternaria rot fungus).